The primary structure comprises 494 residues: BTB/POZ domain and ankyrin repeat-containing protein NH5.1 (494 aa).

Residues 25 to 130 form the BTB domain; sequence SDVAFSVEGR…LYSGQASVAA (106 aa). The disordered stretch occupies residues 60–94; sequence NHQPPPPPPPLNWPMAGGGGGGSGGGGRGGAGGGG. Pro residues predominate over residues 61-71; the sequence is HQPPPPPPPLN. Positions 75–94 are enriched in gly residues; sequence AGGGGGGSGGGGRGGAGGGG. A C2HC NPR-type zinc finger spans residues 136–150; the sequence is LPGCGARGCWHTRCG. Residues Cys-139, Cys-144, His-146, and Cys-149 each contribute to the Zn(2+) site. ANK repeat units follow at residues 274 to 302, 303 to 333, 338 to 367, and 371 to 405; these read NKIR…GLDL, DDAL…DVNS, TGKT…DPNS, and DGVT…KLRL. 2 disordered regions span residues 421 to 443 and 469 to 494; these read DGAP…PRSD and AAGE…NGFA.

This sequence belongs to the plant 'ANKYRIN-BTB/POZ' family. 'NOOT-BOP-COCH-like' (NBCL) subfamily. As to quaternary structure, homodimer. Interacts with TGAL5, TGAL7, TGAL8 and TGAL9.

The protein localises to the nucleus. The protein resides in the cytoplasm. It participates in protein modification; protein ubiquitination. Its function is as follows. May act as a substrate-specific adapter of an E3 ubiquitin-protein ligase complex (CUL3-RBX1-BTB) which mediates the ubiquitination and subsequent proteasomal degradation of target proteins. Transcriptional co-regulator involved in the promotion of leaf and floral meristem fate and determinacy. Required for the abscission of senescent organs, probably by regulating the cell wall disorganization in abscission zones (AZs, e.g. pulvini at the base of leaves). In Oryza sativa subsp. japonica (Rice), this protein is BTB/POZ domain and ankyrin repeat-containing protein NH5.1.